We begin with the raw amino-acid sequence, 573 residues long: Thiol:disulfide interchange protein DsbD (573 aa).

The first 20 residues, 1–20 (MLKRFFLLLSSLLLVCNVQA), serve as a signal peptide directing secretion. Topologically, residues 21 to 175 (GLFNNKPQYL…AENLSNNYLS (155 aa)) are periplasmic. 2 disulfide bridges follow: Cys121-Cys126 and Cys191-Cys313. Residues 176–196 (IFGFLLLGIGLAFTPCVLPML) traverse the membrane as a helical segment. Over 197–227 (PLLSAIVIGHKNRPNTSRALLLSFTYVQGMA) the chain is Cytoplasmic. A helical transmembrane segment spans residues 228-248 (LTYTLLGLTVAAIGLPFQVAL). At 249–251 (QSP) the chain is on the periplasmic side. A helical membrane pass occupies residues 252–272 (AVLISLAVLFTLLAASMFGLF). The Cytoplasmic portion of the chain corresponds to 273 to 292 (EIRLPNTWQQKLNALSQQQQ). The chain crosses the membrane as a helical span at residues 293–313 (GGAVGNVFIMGIIAGLVASPC). Residues 314-331 (TSAPLSGALLYVAQSGNL) lie on the Periplasmic side of the membrane. The chain crosses the membrane as a helical span at residues 332–352 (LIGGLALYLLALGMGLPLILI). Over 353–365 (TVFGNQILPKSGE) the chain is Cytoplasmic. A helical transmembrane segment spans residues 366 to 386 (WLFKVKTAFGFVMLALPIFLI). Residues 387-393 (SRILPSH) lie on the Periplasmic side of the membrane. Residues 394–414 (YEPFLWSTLALAFLGWLISSL) traverse the membrane as a helical segment. Residues 415–425 (NYSTMLKQAVR) lie on the Cytoplasmic side of the membrane. The chain crosses the membrane as a helical span at residues 426–446 (ILLFIAFGLTAYPWANLVWQT). Residues 440 to 573 (ANLVWQTTSN…NQFLAWLNRL (134 aa)) form the Thioredoxin domain. At 447 to 573 (TSNTAQPTTP…NQFLAWLNRL (127 aa)) the chain is on the periplasmic side. A disulfide bridge links Cys490 with Cys493.

The protein belongs to the thioredoxin family. DsbD subfamily.

Its subcellular location is the cell inner membrane. It catalyses the reaction [protein]-dithiol + NAD(+) = [protein]-disulfide + NADH + H(+). The enzyme catalyses [protein]-dithiol + NADP(+) = [protein]-disulfide + NADPH + H(+). In terms of biological role, required to facilitate the formation of correct disulfide bonds in some periplasmic proteins and for the assembly of the periplasmic c-type cytochromes. Acts by transferring electrons from cytoplasmic thioredoxin to the periplasm. This transfer involves a cascade of disulfide bond formation and reduction steps. This is Thiol:disulfide interchange protein DsbD from Haemophilus ducreyi (strain 35000HP / ATCC 700724).